A 449-amino-acid polypeptide reads, in one-letter code: Tubulin alpha chain (449 aa).

Q11, E71, S140, G144, T145, T179, N206, and N228 together coordinate GTP. Mg(2+) is bound at residue E71. E254 is an active-site residue.

It belongs to the tubulin family. As to quaternary structure, dimer of alpha and beta chains. A typical microtubule is a hollow water-filled tube with an outer diameter of 25 nm and an inner diameter of 15 nM. Alpha-beta heterodimers associate head-to-tail to form protofilaments running lengthwise along the microtubule wall with the beta-tubulin subunit facing the microtubule plus end conferring a structural polarity. Microtubules usually have 13 protofilaments but different protofilament numbers can be found in some organisms and specialized cells. Mg(2+) serves as cofactor.

It localises to the cytoplasm. The protein localises to the cytoskeleton. The catalysed reaction is GTP + H2O = GDP + phosphate + H(+). In terms of biological role, tubulin is the major constituent of microtubules, a cylinder consisting of laterally associated linear protofilaments composed of alpha- and beta-tubulin heterodimers. Microtubules grow by the addition of GTP-tubulin dimers to the microtubule end, where a stabilizing cap forms. Below the cap, tubulin dimers are in GDP-bound state, owing to GTPase activity of alpha-tubulin. The polypeptide is Tubulin alpha chain (TUB1) (Gibberella zeae (strain ATCC MYA-4620 / CBS 123657 / FGSC 9075 / NRRL 31084 / PH-1) (Wheat head blight fungus)).